Reading from the N-terminus, the 385-residue chain is Lipid-A-disaccharide synthase 2 (385 aa).

This sequence belongs to the LpxB family.

It carries out the reaction a lipid X + a UDP-2-N,3-O-bis[(3R)-3-hydroxyacyl]-alpha-D-glucosamine = a lipid A disaccharide + UDP + H(+). It participates in bacterial outer membrane biogenesis; LPS lipid A biosynthesis. In terms of biological role, condensation of UDP-2,3-diacylglucosamine and 2,3-diacylglucosamine-1-phosphate to form lipid A disaccharide, a precursor of lipid A, a phosphorylated glycolipid that anchors the lipopolysaccharide to the outer membrane of the cell. This is Lipid-A-disaccharide synthase 2 from Legionella pneumophila (strain Paris).